Reading from the N-terminus, the 524-residue chain is D-3-phosphoglycerate dehydrogenase (524 aa).

NAD(+) contacts are provided by residues 149–150, Asp169, 229–231, and Asp255; these read RI and CAR. Arg231 is an active-site residue. Residue Glu260 is part of the active site. The active-site Proton donor is the His278. 278-281 is an NAD(+) binding site; sequence HQGA. The 73-residue stretch at 452-524 folds into the ACT domain; the sequence is LAIIKHIDRP…NIKDVAVINL (73 aa).

This sequence belongs to the D-isomer specific 2-hydroxyacid dehydrogenase family.

The catalysed reaction is (2R)-3-phosphoglycerate + NAD(+) = 3-phosphooxypyruvate + NADH + H(+). Its pathway is amino-acid biosynthesis; L-serine biosynthesis; L-serine from 3-phospho-D-glycerate: step 1/3. The protein is D-3-phosphoglycerate dehydrogenase (serA) of Methanocaldococcus jannaschii (strain ATCC 43067 / DSM 2661 / JAL-1 / JCM 10045 / NBRC 100440) (Methanococcus jannaschii).